The chain runs to 172 residues: MSSKRAKAKTTKKRPQRATSNVFAMFDQSQIQEFKEAFNMIDQNRDGFIDKEDLHDMLASLGKNPTDEYLEGMMSEAPGPINFTMFLTMFGEKLNGTDPEDVIRNAFACFDEEASGFIHEDHLRELLTTMGDRFTDEEVDEMYREAPIDKKGNFNYVEFTRILKHGAKDKDD.

Positions 1–16 (MSSKRAKAKTTKKRPQ) are enriched in basic residues. The tract at residues 1–20 (MSSKRAKAKTTKKRPQRATS) is disordered. S2 bears the N-acetylserine mark. T19 is subject to Phosphothreonine; by MLCK, CIT and ROCK2. The residue at position 20 (S20) is a Phosphoserine; by CDC42BP, CIT, MLCK, PAK1, ROCK1, ROCK2, DAPK1, DAPK2 and ZIPK/DAPK3. 3 EF-hand domains span residues 29 to 64 (SQIQ…LGKN), 98 to 133 (DPED…MGDR), and 134 to 169 (FTDE…GAKD). The Ca(2+) site is built by D42, N44, D46, and D53.

Myosin is a hexamer of 2 heavy chains and 4 light chains: interacts with myosin heavy chain MYO19. Interacts with LUZP1; the interaction results in inhibition of phosphorylation of MYL9 by DAPK3. Phosphorylation increases the actin-activated myosin ATPase activity and thereby regulates the contractile activity. It is required to generate the driving force in the migration of the cells but not necessary for localization of myosin-2 at the leading edge. Phosphorylation is required for myotube formation. Phosphorylated by DAPK3; DAPK3-mediated phosphorylation is inhibited by LUZP1. As to expression, smooth muscle tissues and in some, but not all, nonmuscle cells.

The protein localises to the cytoplasm. It is found in the cytoskeleton. It localises to the cell cortex. Its function is as follows. Myosin regulatory subunit that plays an important role in regulation of both smooth muscle and nonmuscle cell contractile activity via its phosphorylation. Implicated in cytokinesis, receptor capping, and cell locomotion. In myoblasts, may regulate PIEZO1-dependent cortical actomyosin assembly involved in myotube formation. This chain is Myosin regulatory light polypeptide 9 (MYL9), found in Homo sapiens (Human).